Reading from the N-terminus, the 222-residue chain is Peptide methionine sulfoxide reductase MsrA (222 aa).

Cys-60 is an active-site residue.

Belongs to the MsrA Met sulfoxide reductase family.

The enzyme catalyses L-methionyl-[protein] + [thioredoxin]-disulfide + H2O = L-methionyl-(S)-S-oxide-[protein] + [thioredoxin]-dithiol. It carries out the reaction [thioredoxin]-disulfide + L-methionine + H2O = L-methionine (S)-S-oxide + [thioredoxin]-dithiol. Its function is as follows. Has an important function as a repair enzyme for proteins that have been inactivated by oxidation. Catalyzes the reversible oxidation-reduction of methionine sulfoxide in proteins to methionine. The chain is Peptide methionine sulfoxide reductase MsrA from Pseudomonas entomophila (strain L48).